Reading from the N-terminus, the 317-residue chain is Brain-specific serine protease 4 (317 aa).

The N-terminal stretch at 1-32 is a signal peptide; it reads MVVSGAPPALGGGCLGTFTSLLLLASTAILNA. The region spanning 50–290 is the Peptidase S1 domain; sequence VVGGEDSTDS…HRSWVEKIVQ (241 aa). N70 carries an N-linked (GlcNAc...) asparagine glycan. A disulfide bond links C75 and C91. Residues H90 and D141 each act as charge relay system in the active site. Disulfide bonds link C175/C248, C208/C227, and C238/C266. S242 functions as the Charge relay system in the catalytic mechanism.

The protein belongs to the peptidase S1 family. Expressed abundantly in the epithelial cells of the airways, including trachea, esophagus and fetal lung. Scarce in adult lung. Expressed at low levels in placenta, pancreas, prostate and thyroid gland.

The protein localises to the secreted. Functionally, preferentially cleaves the synthetic substrate H-D-Leu-Thr-Arg-pNA compared to tosyl-Gly-Pro-Arg-pNA. In Homo sapiens (Human), this protein is Brain-specific serine protease 4 (PRSS22).